A 279-amino-acid polypeptide reads, in one-letter code: Movement protein (279 aa).

The span at 256–266 (PPIAIGSPSAS) shows a compositional bias: low complexity. The segment at 256-279 (PPIAIGSPSASRNNSFRSQVVNGL) is disordered. Over residues 267-279 (RNNSFRSQVVNGL) the composition is skewed to polar residues.

Belongs to the cucumovirus movement protein family.

Its subcellular location is the host cell junction. The protein localises to the host plasmodesma. Functionally, transports viral genome to neighboring plant cells directly through plasmosdesmata, without any budding. The movement protein allows efficient cell to cell propagation, by bypassing the host cell wall barrier. Acts by forming a tubular structure at the host plasmodesmata, enlarging it enough to allow free passage of virion capsids. This is Movement protein from Cucumis sativus (Cucumber).